Consider the following 569-residue polypeptide: 4-hydroxy-7-methoxy-3-oxo-3,4-dihydro-2H-1,4-benzoxazin-2-yl glucoside beta-D-glucosidase 1b, chloroplastic (569 aa).

A chloroplast-targeting transit peptide spans 1–50; sequence MALLAAATLNPTTHLSLRSRAGRNSENLWLRSTASSQKSKGRFCNLTIRA. A beta-D-glucoside-binding positions include Gln92, His194, and 239–240; that span reads NE. Glu240 functions as the Proton donor in the catalytic mechanism. A disulfide bridge links Cys259 with Cys265. Residues Tyr383, Glu456, Trp504, 511 to 512, and Phe520 contribute to the a beta-D-glucoside site; that span reads EW. Catalysis depends on Glu456, which acts as the Nucleophile.

Belongs to the glycosyl hydrolase 1 family. In terms of assembly, homo- and heterohexamers. As to expression, expressed in young seedlings early after germination.

It is found in the plastid. It localises to the chloroplast. It carries out the reaction Hydrolysis of terminal, non-reducing beta-D-glucosyl residues with release of beta-D-glucose.. It catalyses the reaction DIMBOA beta-D-glucoside + H2O = DIMBOA + D-glucose. The catalysed reaction is DIBOA beta-D-glucoside + H2O = DIBOA + D-glucose. Functionally, acts in defense of young plant parts against pests via the production of hydroxamic acids from hydroxamic acid glucosides. Enzymatic activity is highly correlated with plant growth. The preferred substrate is DIMBOA-beta-D-glucoside. The protein is 4-hydroxy-7-methoxy-3-oxo-3,4-dihydro-2H-1,4-benzoxazin-2-yl glucoside beta-D-glucosidase 1b, chloroplastic (GLU1B) of Triticum aestivum (Wheat).